A 520-amino-acid polypeptide reads, in one-letter code: Transactivator/viroplasmin protein (520 aa).

Positions 487–520 (QNASADSGPKDGPPPTRSIVEKEDVPTTSSKQVD) are disordered.

It belongs to the caulimoviridae viroplasmin family.

It localises to the host cytoplasm. Enhances the ribosomal termination-reinitiation event leading to the translation of major open reading frames on the polycistronic viral RNAs. In Arabidopsis thaliana (Mouse-ear cress), this protein is Transactivator/viroplasmin protein.